Consider the following 231-residue polypeptide: Orotidine 5'-phosphate decarboxylase (231 aa).

Substrate is bound by residues aspartate 11, lysine 34, 61–70 (DLKLHDIPNT), threonine 117, arginine 179, glutamine 188, glycine 208, and arginine 209. The Proton donor role is filled by lysine 63.

The protein belongs to the OMP decarboxylase family. Type 1 subfamily. Homodimer.

The catalysed reaction is orotidine 5'-phosphate + H(+) = UMP + CO2. It functions in the pathway pyrimidine metabolism; UMP biosynthesis via de novo pathway; UMP from orotate: step 2/2. Catalyzes the decarboxylation of orotidine 5'-monophosphate (OMP) to uridine 5'-monophosphate (UMP). The protein is Orotidine 5'-phosphate decarboxylase of Streptococcus thermophilus (strain CNRZ 1066).